Here is a 182-residue protein sequence, read N- to C-terminus: Troponin I, fast skeletal muscle (182 aa).

G2 bears the N-acetylglycine mark. Residues G2–H48 are involved in binding TNC. T12 bears the Phosphothreonine; by PHK mark. Residues N97–M117 form an involved in binding TNC and actin region. Position 118 is a phosphoserine; by PKA (S118).

It belongs to the troponin I family. In terms of assembly, binds to actin and tropomyosin.

In terms of biological role, troponin I is the inhibitory subunit of troponin, the thin filament regulatory complex which confers calcium-sensitivity to striated muscle actomyosin ATPase activity. The chain is Troponin I, fast skeletal muscle (TNNI2) from Oryctolagus cuniculus (Rabbit).